We begin with the raw amino-acid sequence, 554 residues long: Endochitinase (554 aa).

The first 19 residues, 1–19 (MRATLATLAVLALATAVQS), serve as a signal peptide directing secretion. The GH18 domain occupies 23-398 (ARIVCYFSNW…KILHKHMSSY (376 aa)). A disulfide bond links Cys27 and Cys52. 76-77 (LD) contacts chitin. The N-linked (GlcNAc...) asparagine glycan is linked to Asn85. Residue 103–106 (GGWA) coordinates chitin. Glu146 serves as the catalytic Proton donor. Residues Tyr147 and 213 to 216 (MSYD) each bind chitin. Asn303 carries an N-linked (GlcNAc...) asparagine glycan. Trp370 lines the chitin pocket. The interval 398–494 (YTVPPPHTEN…VPPTENEVDG (97 aa)) is disordered. The span at 431–457 (PTTTTAKPASTTKTTVKTTTTTTAKPP) shows a compositional bias: low complexity. Residues 467 to 477 (INVRPEPKPEP) are compositionally biased toward basic and acidic residues. Positions 495–553 (SEICNSDQDYIPDKKHCDKYWRCVNGEAMQFSCQHGTVFNVELNVCDWPSNATRRECQQ) constitute a Chitin-binding type-2 domain. A disulfide bridge connects residues Cys527 and Cys540. The N-linked (GlcNAc...) asparagine glycan is linked to Asn545.

Belongs to the glycosyl hydrolase 18 family. Chitinase class II subfamily. Epidermis and gut.

It is found in the secreted. The enzyme catalyses Random endo-hydrolysis of N-acetyl-beta-D-glucosaminide (1-&gt;4)-beta-linkages in chitin and chitodextrins.. Digests chitin in the exoskeleton during the molting process. This chain is Endochitinase, found in Manduca sexta (Tobacco hawkmoth).